We begin with the raw amino-acid sequence, 155 residues long: Transcriptional regulator MraZ (155 aa).

2 SpoVT-AbrB domains span residues 7–54 (TYEC…PMEE) and 83–126 (VKTV…DKDK).

The protein belongs to the MraZ family. Forms oligomers.

It is found in the cytoplasm. The protein resides in the nucleoid. The polypeptide is Transcriptional regulator MraZ (Christiangramia forsetii (strain DSM 17595 / CGMCC 1.15422 / KT0803) (Gramella forsetii)).